A 245-amino-acid polypeptide reads, in one-letter code: Thiopurine S-methyltransferase (245 aa).

29-40 provides a ligand contact to S-adenosyl-L-methionine; sequence WREKWVDGKIGF. A substrate-binding site is contributed by F40. K58 bears the N6-acetyllysine mark. Residues L69, E90, and R152 each coordinate S-adenosyl-L-methionine.

It belongs to the class I-like SAM-binding methyltransferase superfamily. TPMT family. Monomer.

It is found in the cytoplasm. It carries out the reaction S-adenosyl-L-methionine + a thiopurine = S-adenosyl-L-homocysteine + a thiopurine S-methylether.. In Felis catus (Cat), this protein is Thiopurine S-methyltransferase (TPMT).